We begin with the raw amino-acid sequence, 131 residues long: UPF0292 protein PF1724 (131 aa).

In terms of domain architecture, Toprim spans K20 to A103. Positions 26, 69, and 71 each coordinate Mg(2+).

This sequence belongs to the UPF0292 family. It depends on Mg(2+) as a cofactor.

This is UPF0292 protein PF1724 from Pyrococcus furiosus (strain ATCC 43587 / DSM 3638 / JCM 8422 / Vc1).